The chain runs to 277 residues: 3-methyl-2-oxobutanoate hydroxymethyltransferase (277 aa).

2 residues coordinate Mg(2+): aspartate 42 and aspartate 81. 3-methyl-2-oxobutanoate contacts are provided by residues 42–43 (DS), aspartate 81, and lysine 110. Glutamate 112 contacts Mg(2+). Glutamate 179 functions as the Proton acceptor in the catalytic mechanism.

Belongs to the PanB family. Homodecamer; pentamer of dimers. The cofactor is Mg(2+).

Its subcellular location is the cytoplasm. It carries out the reaction 3-methyl-2-oxobutanoate + (6R)-5,10-methylene-5,6,7,8-tetrahydrofolate + H2O = 2-dehydropantoate + (6S)-5,6,7,8-tetrahydrofolate. The protein operates within cofactor biosynthesis; (R)-pantothenate biosynthesis; (R)-pantoate from 3-methyl-2-oxobutanoate: step 1/2. Its function is as follows. Catalyzes the reversible reaction in which hydroxymethyl group from 5,10-methylenetetrahydrofolate is transferred onto alpha-ketoisovalerate to form ketopantoate. The protein is 3-methyl-2-oxobutanoate hydroxymethyltransferase of Anaplasma marginale (strain Florida).